Reading from the N-terminus, the 420-residue chain is Ribulose bisphosphate carboxylase large chain (420 aa).

Substrate is bound by residues N103 and T153. The active-site Proton acceptor is K155. K157 provides a ligand contact to substrate. Mg(2+) contacts are provided by K181, D183, and E184. K181 bears the N6-carboxylysine mark. H274 functions as the Proton acceptor in the catalytic mechanism. R275, H307, and S359 together coordinate substrate.

The protein belongs to the RuBisCO large chain family. Type I subfamily. As to quaternary structure, heterohexadecamer of 8 large chains and 8 small chains; disulfide-linked. The disulfide link is formed within the large subunit homodimers. Mg(2+) is required as a cofactor. The disulfide bond which can form in the large chain dimeric partners within the hexadecamer appears to be associated with oxidative stress and protein turnover.

The protein resides in the plastid. It localises to the chloroplast. The enzyme catalyses 2 (2R)-3-phosphoglycerate + 2 H(+) = D-ribulose 1,5-bisphosphate + CO2 + H2O. The catalysed reaction is D-ribulose 1,5-bisphosphate + O2 = 2-phosphoglycolate + (2R)-3-phosphoglycerate + 2 H(+). RuBisCO catalyzes two reactions: the carboxylation of D-ribulose 1,5-bisphosphate, the primary event in carbon dioxide fixation, as well as the oxidative fragmentation of the pentose substrate in the photorespiration process. Both reactions occur simultaneously and in competition at the same active site. In Anemia mexicana (Mexican fern), this protein is Ribulose bisphosphate carboxylase large chain.